Here is a 372-residue protein sequence, read N- to C-terminus: 3-isopropylmalate dehydrogenase (372 aa).

Position 79-90 (Gly-79–Glu-90) interacts with NAD(+). Residues Arg-97, Arg-107, Arg-136, and Asp-225 each coordinate substrate. Residues Asp-225, Asp-250, and Asp-254 each contribute to the Mg(2+) site. Residue Gly-289–Asn-300 coordinates NAD(+).

It belongs to the isocitrate and isopropylmalate dehydrogenases family. As to quaternary structure, homodimer. Mg(2+) is required as a cofactor. Mn(2+) serves as cofactor.

Its subcellular location is the cytoplasm. The catalysed reaction is (2R,3S)-3-isopropylmalate + NAD(+) = 4-methyl-2-oxopentanoate + CO2 + NADH. It participates in amino-acid biosynthesis; L-leucine biosynthesis; L-leucine from 3-methyl-2-oxobutanoate: step 3/4. Catalyzes the oxidation of 3-carboxy-2-hydroxy-4-methylpentanoate (3-isopropylmalate) to 3-carboxy-4-methyl-2-oxopentanoate. The product decarboxylates to 4-methyl-2 oxopentanoate. This chain is 3-isopropylmalate dehydrogenase (LEU2), found in Eremothecium gossypii (strain ATCC 10895 / CBS 109.51 / FGSC 9923 / NRRL Y-1056) (Yeast).